The sequence spans 89 residues: MSLEKTSKAAIVADNARGANDTGSPEVQVALLTARINDLNGHFKAHSKDHHSRRGLIMMVNRRKSLLSYLKNKDATRYRDLIAKLGLRK.

It belongs to the universal ribosomal protein uS15 family. Part of the 30S ribosomal subunit. Forms a bridge to the 50S subunit in the 70S ribosome, contacting the 23S rRNA.

Its function is as follows. One of the primary rRNA binding proteins, it binds directly to 16S rRNA where it helps nucleate assembly of the platform of the 30S subunit by binding and bridging several RNA helices of the 16S rRNA. Functionally, forms an intersubunit bridge (bridge B4) with the 23S rRNA of the 50S subunit in the ribosome. This is Small ribosomal subunit protein uS15 from Herminiimonas arsenicoxydans.